The sequence spans 156 residues: Small ribosomal subunit protein uS7 (156 aa).

Belongs to the universal ribosomal protein uS7 family. Part of the 30S ribosomal subunit. Contacts proteins S9 and S11.

In terms of biological role, one of the primary rRNA binding proteins, it binds directly to 16S rRNA where it nucleates assembly of the head domain of the 30S subunit. Is located at the subunit interface close to the decoding center, probably blocks exit of the E-site tRNA. The chain is Small ribosomal subunit protein uS7 from Microcystis aeruginosa (strain NIES-843 / IAM M-2473).